The primary structure comprises 266 residues: UPF0354 protein lin1649 (266 aa).

Belongs to the UPF0354 family.

The polypeptide is UPF0354 protein lin1649 (Listeria innocua serovar 6a (strain ATCC BAA-680 / CLIP 11262)).